The sequence spans 555 residues: Membrane protein insertase YidC (555 aa).

Residues 7–24 traverse the membrane as a helical segment; it reads ILWVIFSMSLVLLYDNWQ. Low complexity-rich tracts occupy residues 40–54 and 64–81; these read QQAA…TPQA and AAPG…QPVG. Residues 40-81 are disordered; the sequence is QQAAPAGAGGATPQADVPKANATNAAPGTVPAAPQAAAQPVG. Transmembrane regions (helical) follow at residues 334–354, 360–380, 430–450, 468–488, and 503–523; these read LELV…FWLL, FLGN…LVFF, LGGC…YWVL, LSVP…MFVQ, and VMMI…AGLV.

It belongs to the OXA1/ALB3/YidC family. Type 1 subfamily. In terms of assembly, interacts with the Sec translocase complex via SecD. Specifically interacts with transmembrane segments of nascent integral membrane proteins during membrane integration.

The protein resides in the cell inner membrane. Its function is as follows. Required for the insertion and/or proper folding and/or complex formation of integral membrane proteins into the membrane. Involved in integration of membrane proteins that insert both dependently and independently of the Sec translocase complex, as well as at least some lipoproteins. Aids folding of multispanning membrane proteins. This chain is Membrane protein insertase YidC, found in Cupriavidus metallidurans (strain ATCC 43123 / DSM 2839 / NBRC 102507 / CH34) (Ralstonia metallidurans).